Reading from the N-terminus, the 218-residue chain is Non-structural protein NS3 (218 aa).

Belongs to the orbivirus NS3 family.

Its function is as follows. May play a role in the release of virions from infected cells. The polypeptide is Non-structural protein NS3 (Segment-10) (Camelus dromedarius (Dromedary)).